Here is a 58-residue protein sequence, read N- to C-terminus: Large ribosomal subunit protein bL32c (58 aa).

Disordered regions lie at residues 1–21 (MAVP…SQWM) and 34–58 (LAGR…MQPN). Positions 44 to 58 (QMQPTQMQPTQMQPN) are enriched in low complexity.

Belongs to the bacterial ribosomal protein bL32 family.

It localises to the plastid. The protein resides in the chloroplast. The protein is Large ribosomal subunit protein bL32c of Cyanidioschyzon merolae (strain NIES-3377 / 10D) (Unicellular red alga).